We begin with the raw amino-acid sequence, 1207 residues long: MSALRWTRSAAGLGRVLRSPGPHRPPSEEGTFGGFCSSRRSSAASPREQHVLREWGHAELLEVLEARVRQLRAEGTPEMRVKKVQVDRPPQGHSSRWAQKLEAEKRVKQRRQKEVDQQKQALTQEFWTLHKEPKIWNKKLAGYLQPSKKGTPTNSEEKQLAQALQAALGRLSSREAEALARKKAKAVEAQILVLQQKFLAFFECCVCTGQVPLAHHVLVTHHNNGDRQQVLTLHMYNTVMLGWARKGSFRELVYVFLMLKDAGLSPDLCSYAAALQCMGRRDQDVRTIQRCLKQMMEEGFQPQLLFTDLVLEEEDRAALLRAVVKAEPAFRPPPQAPSPVNTSTLLKDIYSKEGPVSYPKLHLPLDTLQDLFYQQLHVELSSSVCVQSVEKAPVMSKEVIEARKTLQALREQWEVELLRVLRETKATMGRQAYEGQPTLYPFLCLLSEGEFVSILMQVLKVLPAQGEPLIQLAHNLGLRVLNRHLVKQKQVTNHVQKLGQRYSQYLQLLASDTQVAPCLPREYWESLGPLEAPAQQPWSVPVLLQLGKQLAELLVQAVQMPRSLAARQGAQRSIPVLYHVYSFRSYRQVGILKPHPAFTHLLETAAEPTLTFETTEVPMLCPPLPWTSLHSGAYLLSSTKLMRATEGTTQHQRLLEQCPPAQLHGPLDALTQLGNCAWRVNGHLLDLVLQIFRDKGCMPLGVPPPRSEAPRPARYQLPPGSTPVHKSELRKELARCLKVAREMHSLRSEALYRLSLAQHLRHRVFWLPHNMDFRGRTYPCPPHFNHLGSDLARALLEFAEGRPLGPRGLDWLKIHLINLTGLKKGDSLRMRLAFADEVMEEILDSADNPLTGRKWWMEADEPWQTLACCMEVAHAVRSPDPAAYISHLPVHQDGSCNGLQHYAALGRDSVGAASVNLTPSDLPQDVYREVATQVEEFRQQDAKEGLRVAQVLEGFISRKVVKQTVMTVVYGVTRYGGRLQIEKRLRELSDFPQEFVWEASHYLVRQVFKSLQEMFTSTRAIQHWLTESANLISHAGWPVEWVTPLGIPIIQPYHRESKVQVKGGLQSITLTSSVDESQKPNTLKQKNGFPPNFIHSLDSSHMMLTALHCYRKGLIFVSVHDCFWTHAADIPTMNEVCREQFVRLHSQPILEDLAKFLKKRFCSVSSIKSLKSSERALVTKLQETLQSLPKTGTFDLGQVIRSTYFFS.

A mitochondrion-targeting transit peptide spans 1–41; it reads MSALRWTRSAAGLGRVLRSPGPHRPPSEEGTFGGFCSSRRS. Disordered stretches follow at residues 1–48 and 82–103; these read MSAL…SPRE and KKVQ…KLEA. PPR repeat units lie at residues 232–266 and 267–302; these read TLHM…GLSP and DLCS…GFQP. Residues 702 to 724 are disordered; the sequence is VPPPRSEAPRPARYQLPPGSTPV. Residues 773 to 1207 form a mediates interaction with TEFM region; it reads FRGRTYPCPP…QVIRSTYFFS (435 aa). Residues Asp-893, Lys-962, and Asp-1121 contribute to the active site.

The protein belongs to the phage and mitochondrial RNA polymerase family. As to quaternary structure, homodimer. Component of the mitochondrial transcription initiation complex, composed at least of TFB2M, TFAM and POLRMT. In this complex TFAM recruits POLRMT to the promoter whereas TFB2M induces structural changes in POLRMT to enable promoter opening and trapping of the DNA non-template strand. Upon metabolic stress, forms a complex composed of FOXO3, SIRT3 and mitochondrial RNA polymerase POLRMT; the complex is recruited to mtDNA in a SIRT3-dependent manner. Also forms a complex composed of FOXO3, SIRT3, TFAM and POLRMT. Interacts with TFB1M and TFB2M, leading to the stimulation of transcription. Interacts with TEFM. Interacts with MTRES1.

It is found in the mitochondrion. The catalysed reaction is RNA(n) + a ribonucleoside 5'-triphosphate = RNA(n+1) + diphosphate. DNA-dependent RNA polymerase catalyzes the transcription of mitochondrial DNA into RNA using the four ribonucleoside triphosphates as substrates. Component of the mitochondrial transcription initiation complex, composed at least of TFB2M, TFAM and POLRMT that is required for basal transcription of mitochondrial DNA. In this complex, TFAM recruits POLRMT to a specific promoter whereas TFB2M induces structural changes in POLRMT to enable promoter opening and trapping of the DNA non-template strand. Has DNA primase activity. Catalyzes the synthesis of short RNA primers that are necessary for the initiation of lagging-strand DNA synthesis from the origin of light-strand DNA replication (OriL). The polypeptide is DNA-directed RNA polymerase, mitochondrial (Mus musculus (Mouse)).